We begin with the raw amino-acid sequence, 248 residues long: Pyridoxine 5'-phosphate synthase (248 aa).

Asparagine 10 contacts 3-amino-2-oxopropyl phosphate. Residue 12–13 (DH) participates in 1-deoxy-D-xylulose 5-phosphate binding. Residue arginine 21 coordinates 3-amino-2-oxopropyl phosphate. Residue histidine 46 is the Proton acceptor of the active site. The 1-deoxy-D-xylulose 5-phosphate site is built by arginine 48 and histidine 53. Glutamate 73 functions as the Proton acceptor in the catalytic mechanism. Threonine 103 serves as a coordination point for 1-deoxy-D-xylulose 5-phosphate. Histidine 194 functions as the Proton donor in the catalytic mechanism. 3-amino-2-oxopropyl phosphate contacts are provided by residues glycine 195 and 216-217 (GH).

This sequence belongs to the PNP synthase family. As to quaternary structure, homooctamer; tetramer of dimers.

The protein localises to the cytoplasm. It catalyses the reaction 3-amino-2-oxopropyl phosphate + 1-deoxy-D-xylulose 5-phosphate = pyridoxine 5'-phosphate + phosphate + 2 H2O + H(+). The protein operates within cofactor biosynthesis; pyridoxine 5'-phosphate biosynthesis; pyridoxine 5'-phosphate from D-erythrose 4-phosphate: step 5/5. Catalyzes the complicated ring closure reaction between the two acyclic compounds 1-deoxy-D-xylulose-5-phosphate (DXP) and 3-amino-2-oxopropyl phosphate (1-amino-acetone-3-phosphate or AAP) to form pyridoxine 5'-phosphate (PNP) and inorganic phosphate. The sequence is that of Pyridoxine 5'-phosphate synthase from Legionella pneumophila (strain Lens).